The chain runs to 507 residues: ATP synthase subunit alpha, chloroplastic (507 aa).

170–177 (GDRQTGKT) is a binding site for ATP.

Belongs to the ATPase alpha/beta chains family. As to quaternary structure, F-type ATPases have 2 components, CF(1) - the catalytic core - and CF(0) - the membrane proton channel. CF(1) has five subunits: alpha(3), beta(3), gamma(1), delta(1), epsilon(1). CF(0) has four main subunits: a, b, b' and c.

Its subcellular location is the plastid. The protein localises to the chloroplast thylakoid membrane. It carries out the reaction ATP + H2O + 4 H(+)(in) = ADP + phosphate + 5 H(+)(out). Its function is as follows. Produces ATP from ADP in the presence of a proton gradient across the membrane. The alpha chain is a regulatory subunit. In Liriodendron tulipifera (Tuliptree), this protein is ATP synthase subunit alpha, chloroplastic.